We begin with the raw amino-acid sequence, 681 residues long: Transketolase 2 (681 aa).

Histidine 30 contributes to the substrate binding site. Thiamine diphosphate-binding positions include histidine 69 and 116 to 118 (GPL). Aspartate 157 serves as a coordination point for Mg(2+). Thiamine diphosphate is bound by residues glycine 158 and asparagine 187. Mg(2+) is bound by residues asparagine 187 and isoleucine 189. Histidine 263, arginine 359, and serine 386 together coordinate substrate. Histidine 263 provides a ligand contact to thiamine diphosphate. Glutamate 418 and phenylalanine 445 together coordinate thiamine diphosphate. The active-site Proton donor is glutamate 418. Substrate contacts are provided by histidine 469, aspartate 477, and arginine 528.

The protein belongs to the transketolase family. In terms of assembly, homodimer. The cofactor is Mg(2+). Ca(2+) serves as cofactor. It depends on Mn(2+) as a cofactor. Requires Co(2+) as cofactor. Thiamine diphosphate is required as a cofactor.

It carries out the reaction D-sedoheptulose 7-phosphate + D-glyceraldehyde 3-phosphate = aldehydo-D-ribose 5-phosphate + D-xylulose 5-phosphate. Catalyzes the transfer of a two-carbon ketol group from a ketose donor to an aldose acceptor, via a covalent intermediate with the cofactor thiamine pyrophosphate. In Saccharomyces cerevisiae (strain ATCC 204508 / S288c) (Baker's yeast), this protein is Transketolase 2 (TKL2).